The sequence spans 840 residues: Probable sulfate permease C869.05c (840 aa).

12 helical membrane passes run 120–140 (WLINDLIAGITVGCVVVPQGM), 148–168 (LPSEYGLYSSFVGVAIYCFFA), 173–193 (VSIGPVAVMSLITAKVIANVM), 208–228 (LALLAGAITCGIGLLRLGFII), 230–250 (FIPVPAVAGFTTGSALNILSG), 278–298 (LPDTTVDAAFGLVSLFILFFT), 315–335 (AFFLTNTLRSAVVVIVGTAIS), 410–430 (LIAMGVTNLIGIFFNAYPATG), 447–467 (IAGIFTAAVVILSLYCLTDAF), 470–490 (IPNAILSAVIIHAVTDLILPM), 505–525 (CIFFISVIVSVFSSIENGIYV), and 527–547 (VCLAAALLLLRIAKPHGSFLG). The STAS domain occupies 578 to 733 (NLEIQSPPPG…CVEVAAPLRD (156 aa)). Residue serine 823 is modified to Phosphoserine.

This sequence belongs to the SLC26A/SulP transporter (TC 2.A.53) family.

Its subcellular location is the membrane. High affinity uptake of sulfate into the cell. The sequence is that of Probable sulfate permease C869.05c from Schizosaccharomyces pombe (strain 972 / ATCC 24843) (Fission yeast).